We begin with the raw amino-acid sequence, 568 residues long: Potassium-transporting ATPase potassium-binding subunit (568 aa).

The next 10 helical transmembrane spans lie at 3-23 (TEILGVVAQVALMVILAYPLG), 64-84 (FLKALLILNAFWFVWGMVLLV), 133-153 (FVIMLFQFITAATGMAAMAGI), 179-199 (ILLPLSLIVGFILILQGTPMG), 255-275 (MVECWSILIIPMAMVLALGFY), 281-301 (LAYSIFGVMLFAFLVGVCINV), 375-395 (FGGVGVGWMNYYTFIIIAVFI), 418-438 (IATIVALLHPFVILVFTAISS), 497-517 (IVLILSRFLPIIGQVAIAGLL), and 536-556 (TFGIMTFVVIFIVAALSFFPV).

This sequence belongs to the KdpA family. As to quaternary structure, the system is composed of three essential subunits: KdpA, KdpB and KdpC.

The protein resides in the cell inner membrane. Functionally, part of the high-affinity ATP-driven potassium transport (or Kdp) system, which catalyzes the hydrolysis of ATP coupled with the electrogenic transport of potassium into the cytoplasm. This subunit binds the periplasmic potassium ions and delivers the ions to the membrane domain of KdpB through an intramembrane tunnel. This Bacteroides thetaiotaomicron (strain ATCC 29148 / DSM 2079 / JCM 5827 / CCUG 10774 / NCTC 10582 / VPI-5482 / E50) protein is Potassium-transporting ATPase potassium-binding subunit.